The primary structure comprises 202 residues: Large ribosomal subunit protein bL25 (202 aa).

Residues 180 to 202 (PKQEAFEEDAEPSPGEEPEGENQ) are disordered. The span at 185-202 (FEEDAEPSPGEEPEGENQ) shows a compositional bias: acidic residues.

This sequence belongs to the bacterial ribosomal protein bL25 family. CTC subfamily. As to quaternary structure, part of the 50S ribosomal subunit; part of the 5S rRNA/L5/L18/L25 subcomplex. Contacts the 5S rRNA. Binds to the 5S rRNA independently of L5 and L18.

This is one of the proteins that binds to the 5S RNA in the ribosome where it forms part of the central protuberance. The protein is Large ribosomal subunit protein bL25 of Bacillus velezensis (strain DSM 23117 / BGSC 10A6 / LMG 26770 / FZB42) (Bacillus amyloliquefaciens subsp. plantarum).